We begin with the raw amino-acid sequence, 213 residues long: Glycerol-3-phosphate acyltransferase (213 aa).

A run of 6 helical transmembrane segments spans residues 3 to 23, 48 to 68, 71 to 91, 119 to 139, 144 to 164, and 165 to 185; these read IIIL…GLWI, ILGV…GTLA, LPLI…LAVI, PFFL…FSMI, VVAA…GFIL, and TSYD…IIFR.

Belongs to the PlsY family. Probably interacts with PlsX.

Its subcellular location is the cell membrane. The catalysed reaction is an acyl phosphate + sn-glycerol 3-phosphate = a 1-acyl-sn-glycero-3-phosphate + phosphate. It functions in the pathway lipid metabolism; phospholipid metabolism. In terms of biological role, catalyzes the transfer of an acyl group from acyl-phosphate (acyl-PO(4)) to glycerol-3-phosphate (G3P) to form lysophosphatidic acid (LPA). This enzyme utilizes acyl-phosphate as fatty acyl donor, but not acyl-CoA or acyl-ACP. The chain is Glycerol-3-phosphate acyltransferase from Lactococcus lactis subsp. cremoris (strain SK11).